The chain runs to 312 residues: Carbamate kinase 2 (312 aa).

It belongs to the carbamate kinase family.

The protein localises to the cytoplasm. It catalyses the reaction hydrogencarbonate + NH4(+) + ATP = carbamoyl phosphate + ADP + H2O + H(+). It functions in the pathway metabolic intermediate metabolism; carbamoyl phosphate degradation; CO(2) and NH(3) from carbamoyl phosphate: step 1/1. This is Carbamate kinase 2 (arcC2) from Enterococcus faecalis (strain ATCC 700802 / V583).